Reading from the N-terminus, the 910-residue chain is Dimethylsulfide dehydrogenase subunit alpha (910 aa).

Residues 1–28 (MLRTTRRTLMQGASLVGAGLFAAGRGWA) constitute a signal peptide (tat-type signal). Residues 59 to 123 (DYVGKAAHCI…IHSTSMYEAD (65 aa)) enclose the 4Fe-4S Mo/W bis-MGD-type domain. [4Fe-4S] cluster-binding residues include histidine 66, cysteine 70, cysteine 74, and cysteine 109.

This sequence belongs to the prokaryotic molybdopterin-containing oxidoreductase family. Heterotrimer of alpha, beta and gamma subunits. [4Fe-4S] cluster is required as a cofactor. It depends on Mo-bis(molybdopterin guanine dinucleotide) as a cofactor. In terms of processing, predicted to be exported by the Tat system. The position of the signal peptide cleavage has been experimentally proven.

The protein resides in the periplasm. The catalysed reaction is 2 Fe(III)-[cytochrome c2] + dimethyl sulfide + H2O = 2 Fe(II)-[cytochrome c2] + dimethyl sulfoxide + 2 H(+). Its function is as follows. Allows photoautotrophic growth on dimethyl sulfide (DMS) as the sole electron donor. This chain is Dimethylsulfide dehydrogenase subunit alpha (ddhA), found in Rhodovulum sulfidophilum (Rhodobacter sulfidophilus).